The chain runs to 181 residues: Adenine phosphoribosyltransferase (181 aa).

Belongs to the purine/pyrimidine phosphoribosyltransferase family. As to quaternary structure, homodimer.

The protein resides in the cytoplasm. It catalyses the reaction AMP + diphosphate = 5-phospho-alpha-D-ribose 1-diphosphate + adenine. The protein operates within purine metabolism; AMP biosynthesis via salvage pathway; AMP from adenine: step 1/1. In terms of biological role, catalyzes a salvage reaction resulting in the formation of AMP, that is energically less costly than de novo synthesis. The polypeptide is Adenine phosphoribosyltransferase (Methylobacterium radiotolerans (strain ATCC 27329 / DSM 1819 / JCM 2831 / NBRC 15690 / NCIMB 10815 / 0-1)).